A 202-amino-acid polypeptide reads, in one-letter code: Small ribosomal subunit protein uS4 (202 aa).

A compositionally biased stretch (basic residues) spans 1–13; that stretch reads MSRYRGPRLRVTR. A disordered region spans residues 1–42; sequence MSRYRGPRLRVTRRLGELPGLTRKASKKSNPPGQHGQARRKR. The 63-residue stretch at 90–152 folds into the S4 RNA-binding domain; sequence NRLDNVCFRL…KASKKLVEGN (63 aa).

It belongs to the universal ribosomal protein uS4 family. In terms of assembly, part of the 30S ribosomal subunit. Contacts protein S5. The interaction surface between S4 and S5 is involved in control of translational fidelity.

Functionally, one of the primary rRNA binding proteins, it binds directly to 16S rRNA where it nucleates assembly of the body of the 30S subunit. In terms of biological role, with S5 and S12 plays an important role in translational accuracy. The sequence is that of Small ribosomal subunit protein uS4 from Prochlorococcus marinus (strain MIT 9515).